The chain runs to 463 residues: Probable cysteine protease RD21B (463 aa).

An N-terminal signal peptide occupies residues Met1 to Ala21. A propeptide spans Met22–Ala137 (activation peptide). An N-linked (GlcNAc...) asparagine glycan is attached at Asn92. 5 cysteine pairs are disulfide-bonded: Cys159–Cys201, Cys193–Cys234, Cys292–Cys343, Cys376–Cys388, and Cys382–Cys403. Cys162 is an active-site residue. Active-site residues include His298 and Asn318. Residues Lys354–Ala463 constitute a propeptide, removed in mature form. An N-linked (GlcNAc...) asparagine glycan is attached at Asn415.

Belongs to the peptidase C1 family. Interacts with PRN2. Interacts with WSCP.

Probable thiol protease. The polypeptide is Probable cysteine protease RD21B (Arabidopsis thaliana (Mouse-ear cress)).